The chain runs to 406 residues: Imidazolonepropionase (406 aa).

Residues histidine 65 and histidine 67 each coordinate Fe(3+). Histidine 65 and histidine 67 together coordinate Zn(2+). Positions 74, 137, and 170 each coordinate 4-imidazolone-5-propanoate. Tyrosine 137 provides a ligand contact to N-formimidoyl-L-glutamate. Position 235 (histidine 235) interacts with Fe(3+). Histidine 235 contributes to the Zn(2+) binding site. 4-imidazolone-5-propanoate is bound at residue glutamine 238. Aspartate 310 contacts Fe(3+). Aspartate 310 lines the Zn(2+) pocket. N-formimidoyl-L-glutamate is bound by residues asparagine 312 and glycine 314. Threonine 315 serves as a coordination point for 4-imidazolone-5-propanoate.

The protein belongs to the metallo-dependent hydrolases superfamily. HutI family. Requires Zn(2+) as cofactor. The cofactor is Fe(3+).

The protein localises to the cytoplasm. It catalyses the reaction 4-imidazolone-5-propanoate + H2O = N-formimidoyl-L-glutamate. The protein operates within amino-acid degradation; L-histidine degradation into L-glutamate; N-formimidoyl-L-glutamate from L-histidine: step 3/3. Catalyzes the hydrolytic cleavage of the carbon-nitrogen bond in imidazolone-5-propanoate to yield N-formimidoyl-L-glutamate. It is the third step in the universal histidine degradation pathway. The polypeptide is Imidazolonepropionase (Vibrio vulnificus (strain CMCP6)).